Consider the following 1241-residue polypeptide: ATP-dependent helicase/nuclease subunit A (1241 aa).

The region spanning 12 to 485 (SQWTDDQWKA…IDLAKNFRSR (474 aa)) is the UvrD-like helicase ATP-binding domain. Residue 33–40 (AAAGSGKT) participates in ATP binding. In terms of domain architecture, UvrD-like helicase C-terminal spans 505-805 (GEIDYDADAE…RIMTIHKSKG (301 aa)).

The protein belongs to the helicase family. AddA subfamily. In terms of assembly, heterodimer of AddA and AddB/RexB. Requires Mg(2+) as cofactor.

It carries out the reaction Couples ATP hydrolysis with the unwinding of duplex DNA by translocating in the 3'-5' direction.. The catalysed reaction is ATP + H2O = ADP + phosphate + H(+). The heterodimer acts as both an ATP-dependent DNA helicase and an ATP-dependent, dual-direction single-stranded exonuclease. Recognizes the chi site generating a DNA molecule suitable for the initiation of homologous recombination. The AddA nuclease domain is required for chi fragment generation; this subunit has the helicase and 3' -&gt; 5' nuclease activities. This chain is ATP-dependent helicase/nuclease subunit A, found in Bacillus cereus (strain B4264).